A 356-amino-acid chain; its full sequence is Staphylococcal superantigen-like 3 (356 aa).

The signal sequence occupies residues 1 to 30 (MKMRTIAKTSLALGLLTTGAITVTTQSVKA). The interval 61–165 (ATTQAANTRQ…TIKQAQTDMT (105 aa)) is disordered. Over residues 69 to 104 (RQERTPKLEKAPNTNEEKTSASKIEKISQPKQEEQK) the composition is skewed to basic and acidic residues. A compositionally biased stretch (low complexity) spans 114 to 141 (PKQEQSQTTTESTTPKTKVTTPPSTNTP). Residues 142–164 (QPMQSTKSDTPQSPTIKQAQTDM) are compositionally biased toward polar residues. The interval 228–326 (IDVFIVLEDN…VIKMKNGGKY (99 aa)) is sialyl Lewis X-binding.

Belongs to the staphylococcal/streptococcal toxin family. In terms of assembly, interacts with host TLR2 (via its extracellular domain).

Its subcellular location is the secreted. Functionally, secreted protein that plays an essential role in immune innate response inhibition by interacting with and inhibiting host TLR2. In turn, bacteria recognition by immune cells is impaired and cytokine production is inhibited. Mechanistically, by interacting with TLR2, blocks ligand binding and thus inhibits activation. Second, by interacting with an already formed TLR2-lipopeptide complex, prevents TLR heterodimerization and downstream signaling. The interaction with host TLR2 does not involve sialyl Lewis X interactions. The protein is Staphylococcal superantigen-like 3 of Staphylococcus aureus (strain NCTC 8325 / PS 47).